Consider the following 598-residue polypeptide: Elongation factor 4 (598 aa).

The tr-type G domain maps to 2-184 (TKIRNFSIIA…AVVDRIPPPS (183 aa)). GTP-binding positions include 14 to 19 (DHGKST) and 131 to 134 (NKID).

The protein belongs to the TRAFAC class translation factor GTPase superfamily. Classic translation factor GTPase family. LepA subfamily.

Its subcellular location is the cell inner membrane. The enzyme catalyses GTP + H2O = GDP + phosphate + H(+). Required for accurate and efficient protein synthesis under certain stress conditions. May act as a fidelity factor of the translation reaction, by catalyzing a one-codon backward translocation of tRNAs on improperly translocated ribosomes. Back-translocation proceeds from a post-translocation (POST) complex to a pre-translocation (PRE) complex, thus giving elongation factor G a second chance to translocate the tRNAs correctly. Binds to ribosomes in a GTP-dependent manner. In Syntrophobacter fumaroxidans (strain DSM 10017 / MPOB), this protein is Elongation factor 4.